We begin with the raw amino-acid sequence, 111 residues long: Large ribosomal subunit protein P2 (111 aa).

A disordered region spans residues 62-111 (LASVPSGGAGGAAAAGGAAAAGGAAEAAPEEAKEEEKEESDDDMGFGLFD). The segment covering 76–88 (AGGAAAAGGAAEA) has biased composition (low complexity). S101 bears the Phosphoserine mark.

It belongs to the eukaryotic ribosomal protein P1/P2 family. As to quaternary structure, P1 and P2 exist as dimers at the large ribosomal subunit.

Functionally, plays an important role in the elongation step of protein synthesis. The protein is Large ribosomal subunit protein P2 of Podospora anserina (Pleurage anserina).